The sequence spans 502 residues: MELKMEEISEYLKKQIADFEKKADVSEVGIVTSIGDGVARIYGLDNCMASEMLELPNGVYGMALNLEEDNVGAILFGDDRLVKEGDLVKRTGRVMETPVGEELIGRVVNAIGIPIDGKGPINAKTSRKVDVIAPGIIKRQPVKEPLQTGLKAIDAMIPIGRGQRELVIGDRQTGKTAILLDTIINQKGQNCICIYVACGQRRQSVVQVVETLKKYGAMDHTIVVAATASEPASMQYLAPYVGCAMGEYFRDKGMHALVCYDDLTKQAYAYRQVSLILRRPPGREAYPGDVFYLHSRLLERAAKLSDAEGGGSLTALPVIETQAGDVSGYIPTNVISITDGQIYLEPELFYAGVRPAINVGLSVSRVGGAAQIKAMKQVAGMLRLDLAQYRELAAFAQFAADLDKATRALLERGQRMVELLKQDQYVPMPVEDQIMLIFAGTQGHLDDLPVSAIKAFEQGFLSFIRSQKEDIRKEIREKKELDDTLKQKITDAILEFKKTFQP.

169–176 (GDRQTGKT) is a binding site for ATP.

It belongs to the ATPase alpha/beta chains family. In terms of assembly, F-type ATPases have 2 components, CF(1) - the catalytic core - and CF(0) - the membrane proton channel. CF(1) has five subunits: alpha(3), beta(3), gamma(1), delta(1), epsilon(1). CF(0) has three main subunits: a(1), b(2) and c(9-12). The alpha and beta chains form an alternating ring which encloses part of the gamma chain. CF(1) is attached to CF(0) by a central stalk formed by the gamma and epsilon chains, while a peripheral stalk is formed by the delta and b chains.

The protein localises to the cell inner membrane. The enzyme catalyses ATP + H2O + 4 H(+)(in) = ADP + phosphate + 5 H(+)(out). Its function is as follows. Produces ATP from ADP in the presence of a proton gradient across the membrane. The alpha chain is a regulatory subunit. This chain is ATP synthase subunit alpha, found in Thermodesulfovibrio yellowstonii (strain ATCC 51303 / DSM 11347 / YP87).